The following is a 60-amino-acid chain: Mastoparan (60 aa).

An N-terminal signal peptide occupies residues 1 to 27 (MKDTILILFTAFIALLGFFGMSAEALA). AXPX repeat units follow at residues 27 to 30 (ADPL), 31 to 34 (ADPS), 35 to 38 (AGPN), and 41 to 44 (ADPE). A propeptide spanning residues 28 to 45 (DPLADPSAGPNAEADPEA) is cleaved from the precursor. Position 59 is a leucine amide (Leu-59).

The protein belongs to the MCD family. Mastoparan subfamily. As to expression, expressed by the venom gland.

The protein localises to the secreted. It is found in the target cell membrane. Mast cell degranulating peptide. Its mast cell degranulation activity may be related to the activation of G-protein coupled receptors in mast cells as well as interaction with other proteins located in cell endosomal membranes in the mast cells. Has a membranolytic activity on human glioblastoma multiforme cells (brain tumor cells) that leads to cell necrosis. The chain is Mastoparan from Vespa orientalis (Oriental hornet).